Consider the following 67-residue polypeptide: Large ribosomal subunit protein bL35 (67 aa).

The protein belongs to the bacterial ribosomal protein bL35 family.

This Methylorubrum populi (strain ATCC BAA-705 / NCIMB 13946 / BJ001) (Methylobacterium populi) protein is Large ribosomal subunit protein bL35.